The following is a 469-amino-acid chain: Probable glycine dehydrogenase (decarboxylating) subunit 1 (469 aa).

This sequence belongs to the GcvP family. N-terminal subunit subfamily. As to quaternary structure, the glycine cleavage system is composed of four proteins: P, T, L and H. In this organism, the P 'protein' is a heterodimer of two subunits.

It catalyses the reaction N(6)-[(R)-lipoyl]-L-lysyl-[glycine-cleavage complex H protein] + glycine + H(+) = N(6)-[(R)-S(8)-aminomethyldihydrolipoyl]-L-lysyl-[glycine-cleavage complex H protein] + CO2. Functionally, the glycine cleavage system catalyzes the degradation of glycine. The P protein binds the alpha-amino group of glycine through its pyridoxal phosphate cofactor; CO(2) is released and the remaining methylamine moiety is then transferred to the lipoamide cofactor of the H protein. The sequence is that of Probable glycine dehydrogenase (decarboxylating) subunit 1 from Staphylothermus marinus (strain ATCC 43588 / DSM 3639 / JCM 9404 / F1).